Consider the following 205-residue polypeptide: Small ribosomal subunit protein uS4 (205 aa).

A compositionally biased stretch (basic and acidic residues) spans 1–16 (MSKRESSKYKIDRRMG). Residues 1 to 46 (MSKRESSKYKIDRRMGENIWGRPKSPVNRREYGPGQHGQRRKGKLS) form a disordered region. Residues 94–157 (SRLDAIVYRA…KQLVIVLEAV (64 aa)) enclose the S4 RNA-binding domain.

This sequence belongs to the universal ribosomal protein uS4 family. As to quaternary structure, part of the 30S ribosomal subunit. Contacts protein S5. The interaction surface between S4 and S5 is involved in control of translational fidelity.

Functionally, one of the primary rRNA binding proteins, it binds directly to 16S rRNA where it nucleates assembly of the body of the 30S subunit. With S5 and S12 plays an important role in translational accuracy. The chain is Small ribosomal subunit protein uS4 from Rhizobium leguminosarum bv. trifolii (strain WSM2304).